A 372-amino-acid chain; its full sequence is MAASSHAIAPTDAELLQAQADLWRHSLYYLTSMALKCAVELHIPTAIHNLGGATTLPDLVTALSLPKTKLPFLGRIMRLLVTSGIFASDGANGDGAAAEAVYRLNPLSWLLVEGVESEDHTYQKYFVLATVSQHYVDAGLSLADWFRKDLPEPLPSPFECLHGVPLAHESTKLLDEELDRIVEEGVAAHDNLAIGTIIRECSDIFSGLHSLTYCCGRQGNISATAIIKAFPDIKCTVLNLPRVIETAPADDAVSSVTGDLFHTIPPAQAVMLKLVLHFWSDEDCVKILEQCRKAIPSREEGGKVIIIEILLGPYMGPIMYEAQLLMDMLMMVNTRGRQRTENDWRQIFTKAGFSDYKIVKKIGARGVIEVYP.

3 residues coordinate S-adenosyl-L-methionine: Gly-216, Asp-259, and Lys-273. The active-site Proton acceptor is His-277.

The protein belongs to the class I-like SAM-binding methyltransferase superfamily. Cation-independent O-methyltransferase family. COMT subfamily. In terms of assembly, homodimer. As to expression, expressed predominantly in root hairs.

Its function is as follows. O-methyltransferase of unknown substrate specificity. Not active on resorcinol, orcinol, guaiacol, eugenol, ferulic acid, p-coumaric acid, catechol, caffeic acid or monomethyl ethers of resorcinol or orcinol. The sequence is that of Probable O-methyltransferase 2 (OMT2) from Sorghum bicolor (Sorghum).